The primary structure comprises 289 residues: uncharacterized protein (289 aa).

This is an uncharacterized protein from Homo sapiens (Human).